Here is a 302-residue protein sequence, read N- to C-terminus: Glutaminase (302 aa).

Residues serine 61, asparagine 111, glutamate 155, asparagine 162, tyrosine 186, tyrosine 238, and valine 256 each coordinate substrate.

Belongs to the glutaminase family. In terms of assembly, homotetramer.

The enzyme catalyses L-glutamine + H2O = L-glutamate + NH4(+). This Pseudomonas paraeruginosa (strain DSM 24068 / PA7) (Pseudomonas aeruginosa (strain PA7)) protein is Glutaminase.